Consider the following 147-residue polypeptide: Small ribosomal subunit protein uS12 (147 aa).

It belongs to the universal ribosomal protein uS12 family. As to quaternary structure, part of the 30S ribosomal subunit.

Functionally, with S4 and S5 plays an important role in translational accuracy. Located at the interface of the 30S and 50S subunits. The chain is Small ribosomal subunit protein uS12 from Sulfurisphaera tokodaii (strain DSM 16993 / JCM 10545 / NBRC 100140 / 7) (Sulfolobus tokodaii).